Reading from the N-terminus, the 767-residue chain is Photosystem I P700 chlorophyll a apoprotein A1 (767 aa).

Residues 1–22 form a disordered region; that stretch reads MTISPPESGEKNKKVLEDPVKA. Over residues 8–22 the composition is skewed to basic and acidic residues; that stretch reads SGEKNKKVLEDPVKA. Transmembrane regions (helical) follow at residues 76–99, 162–185, 201–225, 309–327, 368–391, 407–433, 455–477, and 558–576; these read IFSA…FHGA, LMAL…FHYH, LNHH…HIGA, VSHH…GHMY, RHAQ…HHMY, LGLF…IAMV, ALIS…LYIH, and LMIH…LILL. Residues C600 and C609 each contribute to the [4Fe-4S] cluster site. The next 2 membrane-spanning stretches (helical) occupy residues 616 to 637 and 681 to 703; these read HVFL…HFSW and ISMY…MFLF. A divinylchlorophyll a'-binding site is contributed by H692. Divinyl chlorophyll a is bound by residues M700 and Y708. Residue W709 participates in phylloquinone binding. The helical transmembrane segment at 741–761 threads the bilayer; the sequence is AVGVTHFLVGGIATTWAFFHA.

This sequence belongs to the PsaA/PsaB family. The PsaA/B heterodimer binds the P700 divinyl chlorophyll special pair and subsequent electron acceptors. PSI consists of a core antenna complex that captures photons, and an electron transfer chain that converts photonic excitation into a charge separation. The cyanobacterial PSI reaction center is composed of one copy each of PsaA,B,C,D,E,F,I,J,K,L,M and X, and forms trimeric complexes. PSI electron transfer chain: 5 divinyl chlorophyll a, 1 divinyl chlorophyll a', 2 phylloquinones and 3 4Fe-4S clusters. PSI core antenna: 90 divinyl chlorophyll a, 22 carotenoids, 3 phospholipids and 1 galactolipid. P700 is a divinyl chlorophyll a/divinyl chlorophyll a' dimer, A0 is one or more divinyl chlorophyll a, A1 is one or both phylloquinones and FX is a shared 4Fe-4S iron-sulfur center. serves as cofactor.

It is found in the cellular thylakoid membrane. It catalyses the reaction reduced [plastocyanin] + hnu + oxidized [2Fe-2S]-[ferredoxin] = oxidized [plastocyanin] + reduced [2Fe-2S]-[ferredoxin]. Functionally, psaA and PsaB bind P700, the primary electron donor of photosystem I (PSI), as well as the electron acceptors A0, A1 and FX. PSI is a plastocyanin/cytochrome c6-ferredoxin oxidoreductase, converting photonic excitation into a charge separation, which transfers an electron from the donor P700 chlorophyll pair to the spectroscopically characterized acceptors A0, A1, FX, FA and FB in turn. Oxidized P700 is reduced on the lumenal side of the thylakoid membrane by plastocyanin or cytochrome c6. This chain is Photosystem I P700 chlorophyll a apoprotein A1, found in Prochlorococcus marinus (strain MIT 9301).